The following is a 534-amino-acid chain: Zona pellucida sperm-binding protein 4 (534 aa).

The signal sequence occupies residues 1–17; the sequence is MWLLLQLVWLCFLLSLG. Over 18–509 the chain is Extracellular; the sequence is LNSWHQSKVP…SRSPVDSQAL (492 aa). The N-linked (GlcNAc...) asparagine glycan is linked to Asn71. Positions 141–183 constitute a P-type domain; it reads GLCDSVPVWDRLPCAPSPITQGDCKQLGCCYNSEEVISCYYGN. One can recognise a ZP domain in the interval 188–465; sequence HCTQDGHFSI…TLCPARRRRS (278 aa). 2 N-linked (GlcNAc...) asparagine glycosylation sites follow: Asn202 and Asn219. The O-linked (GalNAc...) serine glycan is linked to Ser292. An O-linked (GalNAc...) threonine glycan is attached at Thr302. Asn314 carries an N-linked (GlcNAc...) asparagine glycan. Residues Cys367 and Cys441 are joined by a disulfide bond. A propeptide spans 462–534 (removed in mature form); it reads RRRSSDIHFQ…MSYLAIRKWR (73 aa). Residue Asn472 is glycosylated (N-linked (GlcNAc...) asparagine). The chain crosses the membrane as a helical span at residues 510–530; that stretch reads WVAGLSGILIVGALFMSYLAI. At 531 to 534 the chain is on the cytoplasmic side; it reads RKWR.

Belongs to the ZP domain family. ZPB subfamily. Post-translationally, proteolytically cleaved before the transmembrane segment to yield the secreted ectodomain incorporated in the zona pellucida. The N-terminus is blocked. In terms of processing, contains disulfide bond(s). As to expression, expressed in oocytes.

The protein localises to the zona pellucida. Its subcellular location is the cell membrane. Component of the zona pellucida, an extracellular matrix surrounding oocytes which mediates sperm binding, induction of the acrosome reaction and prevents post-fertilization polyspermy. The zona pellucida is composed of 3 to 4 glycoproteins, ZP1, ZP2, ZP3, and ZP4. ZP4 may act as a sperm receptor. This is Zona pellucida sperm-binding protein 4 (ZP4) from Bos taurus (Bovine).